Reading from the N-terminus, the 173-residue chain is Coordinator of PRMT5 and differentiation stimulator (173 aa).

Methionine 1 bears the N-acetylmethionine mark. A disordered region spans residues 1 to 70; that stretch reads MDPQAATGRG…EGPSSEEEGF (70 aa). A phosphoserine mark is found at serine 64 and serine 65.

As to quaternary structure, interacts with PRMT5. Interacts with histone H4; specifically interacts with the N-terminus of histone H4 but not with histone H3. Interacts with CBFB. Found in a complex with PRMT5, RUNX1 and CBFB.

The protein localises to the nucleus. Functionally, histone-binding protein required for histone H4 methyltransferase activity of PRMT5. Specifically required for histone H4 'Arg-3' methylation mediated by PRMT5, but not histone H3 'Arg-8' methylation, suggesting that it modulates the substrate specificity of PRMT5. Specifically interacts with the N-terminus of histone H4 but not with histone H3, suggesting that it acts by promoting the association between histone H4 and PRMT5. Involved in CCNE1 promoter repression. Plays a role in muscle cell differentiation by modulating the recruitment of PRMT5 to the promoter of genes involved in the coordination between cell cycle exit and muscle differentiation. The sequence is that of Coordinator of PRMT5 and differentiation stimulator (Coprs) from Mus musculus (Mouse).